We begin with the raw amino-acid sequence, 114 residues long: Hydrogenase maturation factor HypA (114 aa).

His-2 contributes to the Ni(2+) binding site. Zn(2+) is bound by residues Cys-70, Cys-73, Cys-86, and Cys-89.

This sequence belongs to the HypA/HybF family.

Functionally, involved in the maturation of [NiFe] hydrogenases. Required for nickel insertion into the metal center of the hydrogenase. The polypeptide is Hydrogenase maturation factor HypA (Crocosphaera subtropica (strain ATCC 51142 / BH68) (Cyanothece sp. (strain ATCC 51142))).